Here is a 246-residue protein sequence, read N- to C-terminus: MyoD family inhibitor domain-containing protein (246 aa).

Disordered regions lie at residues 1–93 (MSQE…EEET) and 134–164 (KIQS…ASPE). Over 1 to 170 (MSQEREPFSP…ASPEDGCVHC (170 aa)) the chain is Extracellular. Polar residues predominate over residues 63 to 87 (EDNSNSQPIKAQPQRLPQPNTSALE). The 173-residue stretch at 74–246 (QPQRLPQPNT…MECCGICFPS (173 aa)) folds into the MDFI domain. A helical membrane pass occupies residues 171-188 (ILTCLFCEFLTLCNIVVG). Topologically, residues 189–246 (QASCGICTSEACCCCCTEEMGDDCNCPCDMDCGIMDACCESSDCLEICMECCGICFPS) are cytoplasmic.

This sequence belongs to the MDFI family. As to expression, expressed broadly at a low level in the early embryo.

It is found in the cytoplasm. The protein resides in the cell membrane. The protein localises to the secreted. Its function is as follows. Required to control the activity of various transcription factors through their sequestration in the cytoplasm. Retains nuclear Zic proteins in the cytoplasm and inhibits their transcriptional activation. Required for dorsoanterior development. Necessary for siamois to activate downstream target genes, including gsc, during execution of the dorsal organizer program. Also regulates the transcriptional activity of TCF7L1/TCF3 by interacting directly with TCF7L1/TCF3 and preventing it from binding DNA. Involved in the development of lymphatic vessel valves. It is required to promote lymphatic endothelial cell migration, in a process that involves down-regulation of integrin beta 1 activation and control of cell adhesion to the extracellular matrix. This chain is MyoD family inhibitor domain-containing protein, found in Xenopus laevis (African clawed frog).